Here is a 428-residue protein sequence, read N- to C-terminus: Enolase (428 aa).

Gln-163 serves as a coordination point for (2R)-2-phosphoglycerate. The Proton donor role is filled by Glu-205. Residues Asp-243, Glu-286, and Asp-313 each contribute to the Mg(2+) site. Lys-338, Arg-367, Ser-368, and Lys-389 together coordinate (2R)-2-phosphoglycerate. Catalysis depends on Lys-338, which acts as the Proton acceptor.

It belongs to the enolase family. Requires Mg(2+) as cofactor.

The protein resides in the cytoplasm. The protein localises to the secreted. It is found in the cell surface. It carries out the reaction (2R)-2-phosphoglycerate = phosphoenolpyruvate + H2O. Its pathway is carbohydrate degradation; glycolysis; pyruvate from D-glyceraldehyde 3-phosphate: step 4/5. Functionally, catalyzes the reversible conversion of 2-phosphoglycerate (2-PG) into phosphoenolpyruvate (PEP). It is essential for the degradation of carbohydrates via glycolysis. The protein is Enolase of Polaromonas naphthalenivorans (strain CJ2).